Here is a 432-residue protein sequence, read N- to C-terminus: Hexane cyclase pydB (432 aa).

The first 20 residues, 1–20 (MMHQSLGLGLVVFVAAPVVA), serve as a signal peptide directing secretion. Residues asparagine 59, asparagine 78, asparagine 153, and asparagine 308 are each glycosylated (N-linked (GlcNAc...) asparagine).

It belongs to the Diels-Alderase family.

The protein operates within mycotoxin biosynthesis. Hexane cyclase; part of the gene cluster that mediates the biosynthesis of pyrrocidines, fungal natural products containing a macrocyclic para-cyclophane connected to a decahydrofluorene ring system that show potent antibiotic activities toward Gram-negative bacteria. Within the pathway, pydB functions synergistically with pydE, pydX and pydZ to form the cyclophane. The pathway begins with the PKS-NRPS pydA which, with the help of the trans-enoyl reductase pydC, synthesizes the polyketide-tyrosyl acyl thioester product which can be reductively off-loaded by the terminal reductase (R) domain in pydA. The alpha/beta hydrolase pydG is then required to catalyze the subsequent Knoevenagel condensation that affords the 3-pyrrolin-2-one ring, whereas the four proteins pydB, pydE, pydX and pydZ then function synergistically to form the cyclophane. PydB and the membrane-bound pydX and pydZ are lipid-binding proteins that can sequester and mold the pdyG product into the inverse S-shape. Binding of the medium chain reductase pydE to the complex would trigger the cascade oxidative cyclization. PydY is involved the Diels-Alder cycloaddition that forms the decahydrofluorene core. Additional non-enzymatic hydroxylation yields pyrrocidine A2 which can be further reduced into pyrrocidine B by an endogenous reductase. This is Hexane cyclase pydB from Acremonium sp.